The sequence spans 136 residues: MLQPKRTKFRKVHKGRNRGLAAGTEVSFGTFGLKAVGRGRLTARQIEAARRAMTRAVKRQGKIWIRVFPDKPITEKPLEVRMGKGKGNVEYWVALIQPGKVLYEMDGVSEEIARNAFALAAAKLPIKTTFVTKTVM.

This sequence belongs to the universal ribosomal protein uL16 family. In terms of assembly, part of the 50S ribosomal subunit.

In terms of biological role, binds 23S rRNA and is also seen to make contacts with the A and possibly P site tRNAs. The sequence is that of Large ribosomal subunit protein uL16 from Actinobacillus succinogenes (strain ATCC 55618 / DSM 22257 / CCUG 43843 / 130Z).